A 1415-amino-acid chain; its full sequence is DNA-directed RNA polymerase subunit beta' (1415 aa).

Residues Cys-72, Cys-74, Cys-87, and Cys-90 each coordinate Zn(2+). Mg(2+)-binding residues include Asp-463, Asp-465, and Asp-467. The Zn(2+) site is built by Cys-811, Cys-885, Cys-892, and Cys-895.

It belongs to the RNA polymerase beta' chain family. The RNAP catalytic core consists of 2 alpha, 1 beta, 1 beta' and 1 omega subunit. When a sigma factor is associated with the core the holoenzyme is formed, which can initiate transcription. Mg(2+) is required as a cofactor. Zn(2+) serves as cofactor.

The catalysed reaction is RNA(n) + a ribonucleoside 5'-triphosphate = RNA(n+1) + diphosphate. DNA-dependent RNA polymerase catalyzes the transcription of DNA into RNA using the four ribonucleoside triphosphates as substrates. The chain is DNA-directed RNA polymerase subunit beta' from Cereibacter sphaeroides (strain ATCC 17023 / DSM 158 / JCM 6121 / CCUG 31486 / LMG 2827 / NBRC 12203 / NCIMB 8253 / ATH 2.4.1.) (Rhodobacter sphaeroides).